The primary structure comprises 115 residues: Holo-[acyl-carrier-protein] synthase (115 aa).

The Mg(2+) site is built by D8 and E56.

It belongs to the P-Pant transferase superfamily. AcpS family. Mg(2+) is required as a cofactor.

It is found in the cytoplasm. It catalyses the reaction apo-[ACP] + CoA = holo-[ACP] + adenosine 3',5'-bisphosphate + H(+). Transfers the 4'-phosphopantetheine moiety from coenzyme A to a Ser of acyl-carrier-protein. The protein is Holo-[acyl-carrier-protein] synthase of Ureaplasma parvum serovar 3 (strain ATCC 27815 / 27 / NCTC 11736).